Reading from the N-terminus, the 409-residue chain is DEP domain-containing mTOR-interacting protein (409 aa).

Met-1 is modified (N-acetylmethionine). A disordered region spans residues 1–25 (MEEGGSTGSAGSDSSTSGSGGAQQR). 2 consecutive DEP domains span residues 36 to 119 (TGEQ…RFRK) and 145 to 219 (SPEN…QFRM). The DDEX motif motif lies at 217-235 (FRMNFRRRRRLMELLNEKS). Ser-235 bears the Phosphoserine; by MAPK3 mark. Thr-241 is subject to Phosphothreonine. A phosphoserine mark is found at Ser-244 and Ser-258. A Phosphothreonine modification is found at Thr-259. Ser-263, Ser-265, Ser-280, Ser-282, and Ser-283 each carry phosphoserine. Phosphoserine; by CK1 occurs at positions 286 and 287. The short motif at 286–291 (SSGYFS) is the BetaTrCP degron motif element. Phosphotyrosine; by SYK is present on Tyr-289. Residue Ser-291 is modified to Phosphoserine; by CK1. Ser-293 carries the post-translational modification Phosphoserine; by MTOR. Thr-295 carries the phosphothreonine; by MTOR modification. Phosphoserine is present on residues Ser-297 and Ser-298. Ser-299 bears the Phosphoserine; by MTOR mark. The 78-residue stretch at 330-407 (TFTIVGDAVG…TIVMEVMEEL (78 aa)) folds into the PDZ domain.

In terms of assembly, associated component of the mechanistic target of rapamycin complex 1 (mTORC1) which contains MTOR, MLST8 and RPTOR. Associated component of the mechanistic target of rapamycin complex 2 (mTORC2) which contains MTOR, MLST8, PROTOR1, RICTOR, MAPKAP1 and DEPTOR. Interacts (via PDZ domain) with MTOR; interacts with MTOR within both mTORC1 and mTORC2. Interacts (via PDZ domain) with MINAR1 (via N-terminus). Interacts with SIK3. In terms of processing, phosphorylation weakens interaction with MTOR within mTORC1 and mTORC2. Phosphorylated at Ser-286, Ser-287 and Ser-291 in response to mitogenic stimulation by MTOR: DEPTOR is either directly phosphorylated by MTOR or indirectly via proteins kinases that are activated by MTOR, such as CK1/CSNK1A1. Phosphorylation at Ser-286, Ser-287 and Ser-291 promotes ubiquitination by the SCF(BTRC) complex, followed by degradation. Phosphorylation at Ser-235 by MAPK3/ERK1 promotes deubiquitination by USP7, enhancing its stability. Phosphorylation at Tyr-289 by SYK impairs its interaction with MTOR, promoting mTORC1 and mTORC2 signaling. Ubiquitinated; leading to proteasomal degradation. Ubiquitination by the SCF(BTRC) and SCF(FBXW11) complexes following phosphorylation at Ser-286, Ser-287 and Ser-291 by MTOR, leads to its degradation by the proteasome. Deubiquitinated by OTUB1 in response to amino acid via a non-canonical mechanism, leading to DEPTOR stability. Deubiquitinated by USP7 following phosphorylation at Ser-235, promoting its stability.

Its subcellular location is the lysosome membrane. With respect to regulation, inhibited upon phosphatidic acid-binding: phosphatidic acid produced upon mitogenic stimulation promotes DEPTOR dissociatiom from the mTORC1 and mTORC2 complexes, leading to their activation. Specifically binds unsaturated phosphatidic acid, such as 16:0-18:1, 18:0-18:1 and di-18:1. Inhibited when nutrients are present via a feedback loop: phosphorylation by MTOR promotes DEPTOR ubiquitination and degradation. In terms of biological role, negative regulator of the mTORC1 and mTORC2 complexes: inhibits the protein kinase activity of MTOR, thereby inactivating both complexes. DEPTOR inhibits mTORC1 and mTORC2 to induce autophagy. In contrast to AKT1S1/PRAS40, only partially inhibits mTORC1 activity. The chain is DEP domain-containing mTOR-interacting protein from Homo sapiens (Human).